Reading from the N-terminus, the 150-residue chain is Monothiol glutaredoxin-5, mitochondrial (150 aa).

The N-terminal 29 residues, 1–29 (MFLPKFNPIRSFSPILRAKTLLRYQNRMY), are a transit peptide targeting the mitochondrion. Positions 35–140 (RKAIEDAIES…DLLEEAQALV (106 aa)) constitute a Glutaredoxin domain. K52 contacts glutathione. C60 serves as a coordination point for [2Fe-2S] cluster. Residues 92-96 (REGIK), I104, and 117-118 (CD) each bind glutathione.

Belongs to the glutaredoxin family. Monothiol subfamily. As to quaternary structure, homodimer. Interacts with SSQ1. Interacts with BOL1.

It is found in the mitochondrion matrix. Its function is as follows. Monothiol glutaredoxin involved in mitochondrial iron-sulfur (Fe/S) cluster transfer. Receives 2Fe/2S clusters from scaffold protein ISU1 and mediates their transfer to apoproteins, to the 4Fe/FS cluster biosynthesis machinery, or export from mitochondrion. In Saccharomyces cerevisiae (strain ATCC 204508 / S288c) (Baker's yeast), this protein is Monothiol glutaredoxin-5, mitochondrial.